Reading from the N-terminus, the 589-residue chain is Actin-histidine N-methyltransferase (589 aa).

The segment at 1-22 (MGKKSRVKTQKSGTGATATVSP) is disordered. Positions 10-20 (QKSGTGATATV) are enriched in polar residues. Residues Arg-75, 104–106 (EGF), Arg-254, 275–279 (DMCNH), and 325–327 (SGF) each bind S-adenosyl-L-methionine. Positions 94 to 314 (EGFEMVNFKE…AGEQIYIFYG (221 aa)) constitute an SET domain. The residue at position 513 (Ser-513) is a Phosphoserine. The segment at 547–589 (LVNGERSFPNGTRSEEDLKQEERKRAKGDAKESSSDSTDAVKE) is disordered. The segment covering 559–589 (RSEEDLKQEERKRAKGDAKESSSDSTDAVKE) has biased composition (basic and acidic residues).

Belongs to the class V-like SAM-binding methyltransferase superfamily. SETD3 actin-histidine methyltransferase family. As to quaternary structure, interacts with MYOD1. Phosphorylated by GSK3B, which is required for recognition by the SCF(FBXW7) complex and subsequent degradation. In terms of processing, ubiquitinated by the SCF(FBXW7) complex following phosphorylation by GSK3B, leading to its degradation by the proteasome.

It is found in the cytoplasm. It localises to the nucleus. The enzyme catalyses L-histidyl-[protein] + S-adenosyl-L-methionine = N(tele)-methyl-L-histidyl-[protein] + S-adenosyl-L-homocysteine + H(+). Functionally, protein-histidine N-methyltransferase that specifically mediates 3-methylhistidine (tele-methylhistidine) methylation of actin at 'His-73'. Histidine methylation of actin is required for smooth muscle contraction of the laboring uterus during delivery. Does not have protein-lysine N-methyltransferase activity and probably only catalyzes histidine methylation of actin. This chain is Actin-histidine N-methyltransferase, found in Dasypus novemcinctus (Nine-banded armadillo).